Consider the following 134-residue polypeptide: MNTTLFRWPVRVYYEDTDAGGVVYHASYVAFYERARTEMLRHHHFSQQALMAERVAFVVRKMTVEYYAPARLDDMLEIQTEITSMRGTSLVFTQRIVNAENTLLNEAEVLVVCVDPLKMKPRALPKSIVAEFKQ.

Aspartate 18 is a catalytic residue.

This sequence belongs to the 4-hydroxybenzoyl-CoA thioesterase family.

The protein localises to the cell inner membrane. Functionally, thioesterase that appears to be involved in phospholipid metabolism. Some specific acyl-ACPs could be physiological substrates. Displays acyl-CoA thioesterase activity on malonyl-CoA in vitro, catalyzing the hydrolysis of the thioester bond. The chain is Acyl-CoA thioester hydrolase YbgC (ybgC) from Escherichia coli O157:H7.